The sequence spans 49 residues: Large ribosomal subunit protein bL33 (49 aa).

It belongs to the bacterial ribosomal protein bL33 family.

This is Large ribosomal subunit protein bL33 from Desulforamulus reducens (strain ATCC BAA-1160 / DSM 100696 / MI-1) (Desulfotomaculum reducens).